We begin with the raw amino-acid sequence, 235 residues long: Protein fmp52-1, mitochondrial (235 aa).

A mitochondrion-targeting transit peptide spans 1–36 (MANTALIGCTGMVGSFILNNLLAHPSVARVDTISRR).

This sequence belongs to the FMP52 family.

It localises to the mitochondrion outer membrane. The sequence is that of Protein fmp52-1, mitochondrial (fmp521) from Aspergillus oryzae (strain ATCC 42149 / RIB 40) (Yellow koji mold).